Here is an 879-residue protein sequence, read N- to C-terminus: Beta-mannosidase (879 aa).

The first 19 residues, 1–19, serve as a signal peptide directing secretion; sequence MHLHLLLILALFRAGCVVA. 4 N-linked (GlcNAc...) asparagine glycosylation sites follow: N35, N77, N89, and N113. Cysteines 167 and 176 form a disulfide. Residue 190–192 participates in substrate binding; it reads WDW. N226, N297, and N302 each carry an N-linked (GlcNAc...) asparagine glycan. N456 contacts substrate. E457 acts as the Proton donor in catalysis. 3 disulfides stabilise this stretch: C540/C629, C732/C761, and C764/C769. Residue E554 is the Nucleophile of the active site. N-linked (GlcNAc...) asparagine glycosylation is present at N736. 2 N-linked (GlcNAc...) asparagine glycosylation sites follow: N803 and N807.

The protein belongs to the glycosyl hydrolase 2 family. In terms of assembly, monomer. Highest level in liver, high levels in lung, testis, skin and spleen, moderate level in thymus. Activity found in plasma, kidney, liver, spleen, pancreas, brain, testis, epididymis, heart, lung and skeletal muscle.

Its subcellular location is the lysosome. It carries out the reaction Hydrolysis of terminal, non-reducing beta-D-mannose residues in beta-D-mannosides.. The protein operates within glycan metabolism; N-glycan degradation. Its function is as follows. Exoglycosidase that cleaves the single beta-linked mannose residue from the non-reducing end of all N-linked glycoprotein oligosaccharides. The sequence is that of Beta-mannosidase from Mus musculus (Mouse).